Reading from the N-terminus, the 465-residue chain is Dihydrolipoyl dehydrogenase (465 aa).

FAD is bound by residues 34-42, Lys-51, and Gly-114; that span reads EKREAGGTC. Cys-42 and Cys-47 are oxidised to a cystine. NAD(+)-binding positions include 180–184, Glu-203, Val-237, and 264–267; these read GGGVI and SIGR. Residues Asp-307 and Ala-315 each coordinate FAD. The Proton acceptor role is filled by His-439.

The protein belongs to the class-I pyridine nucleotide-disulfide oxidoreductase family. The cofactor is FAD.

Its subcellular location is the cytoplasm. It carries out the reaction N(6)-[(R)-dihydrolipoyl]-L-lysyl-[protein] + NAD(+) = N(6)-[(R)-lipoyl]-L-lysyl-[protein] + NADH + H(+). Functionally, the branched-chain alpha-keto dehydrogenase complex catalyzes the overall conversion of alpha-keto acids to acyl-CoA and CO(2). It contains multiple copies of 3 enzymatic components: branched-chain alpha-keto acid decarboxylase (E1), lipoamide acyltransferase (E2) and lipoamide dehydrogenase (E3). The protein is Dihydrolipoyl dehydrogenase (lpdA) of Chlamydia trachomatis serovar D (strain ATCC VR-885 / DSM 19411 / UW-3/Cx).